We begin with the raw amino-acid sequence, 476 residues long: Monodehydroascorbate reductase 2, peroxisomal (476 aa).

At 1–3 the chain is on the cytoplasmic side; it reads MGR. Residues 4 to 24 form a helical membrane-spanning segment; it reads AFVHVILGGGVAAGYAALEFA. FAD contacts are provided by residues 12-15, Glu-40, Arg-47, Lys-52, and 146-147; these read GGVA and RN. The Peroxisomal portion of the chain corresponds to 25–447; sequence RRGGYSRGEL…GGLALGEKPT (423 aa). NAD(+)-binding positions include 171 to 177, Glu-195, Arg-201, and Gly-260; that span reads GGYIGME. Residue 173 to 177 participates in NADP(+) binding; the sequence is YIGME. 2 residues coordinate NADP(+): Arg-201 and Gly-260. Position 297 (Asp-297) interacts with FAD. Residue 314–315 coordinates NAD(+); the sequence is EH. Position 314–315 (314–315) interacts with NADP(+); the sequence is EH. Residue Val-316 participates in FAD binding. Residue Arg-320 participates in L-ascorbate binding. FAD is bound at residue Tyr-346. Tyr-346 serves as a coordination point for NAD(+). Tyr-346 provides a ligand contact to NADP(+). Arg-348 provides a ligand contact to L-ascorbate. The helical transmembrane segment at 448–468 threads the bilayer; sequence YVWHATAGVIAAASIAAFGYW. The Cytoplasmic segment spans residues 469-476; sequence YGRKRRRW.

Belongs to the FAD-dependent oxidoreductase family. Requires FAD as cofactor.

It localises to the peroxisome membrane. It carries out the reaction 2 monodehydro-L-ascorbate radical + NADH + H(+) = 2 L-ascorbate + NAD(+). Catalyzes the conversion of monodehydroascorbate to ascorbate, oxidizing NADH in the process. Ascorbate is a major antioxidant against reactive oxygen species (ROS) and nitric oxide (NO). This chain is Monodehydroascorbate reductase 2, peroxisomal, found in Oryza sativa subsp. japonica (Rice).